Reading from the N-terminus, the 673-residue chain is MSKPFKLNSAFKPSGDQPDAIRRLEEGLEDGLAHQTLLGVTGSGKTFTIANVIADLQRPTMVLAPNKTLAAQLYGEMKEFFPENAVEYFVSYYDYYQPEAYVPSSDTFIEKDASVNEHIEQMRLSATKALLERRDVVVVASVSAIYGLGDPDLYLKMMLHLTVGMLIDQRAILRRLAELQYTRNDQAFQRGTFRVRGEVIDIFPAESDDIALRVELFDEEVERLSLFDPLTGQVEATVPRYTIYPKTHYVTPRERILQAMEEIKDELADRRKVLLANNKLLEEQRLSQRTQFDLEMMNELGYCSGIENYSRFLSGRGPGEPPPTLFDYLPADGLLVVDESHVTIPQIGGMYRGDRARKETLVEYGFRLPSALDNRPLKFEEFEALAPQTIYVSATPGNYELEKSGDEVVDQVVRPTGLLDPIIEVRPVATQVDDLLSEIRQRAVINERVLVTTLTKRMAEDLTEYLEEHGERVRYLHSDIDTVERMEIIRDLRLGEFDVLVGINLLREGLDMPEVSLVAILDADKEGFLRSERSLIQTIGRAARNVNGKAILYGDKITPSMAKAIGETERRREKQQKYNEEHGITPQGLNKKVVDILALGQNIAKTKAKGKGKGRSTAKTGIVELDMTPKALQQKIHELEGQMMQHAQNLEFEEAAQIRDQLHQLRELFIAAS.

Residues Glu26–Arg183 form the Helicase ATP-binding domain. ATP is bound at residue Gly39–Thr46. Residues Tyr92–Val115 carry the Beta-hairpin motif. Residues Gln431–Leu597 form the Helicase C-terminal domain. One can recognise a UVR domain in the interval Gln633–Leu668.

Belongs to the UvrB family. In terms of assembly, forms a heterotetramer with UvrA during the search for lesions. Interacts with UvrC in an incision complex.

It is found in the cytoplasm. Its function is as follows. The UvrABC repair system catalyzes the recognition and processing of DNA lesions. A damage recognition complex composed of 2 UvrA and 2 UvrB subunits scans DNA for abnormalities. Upon binding of the UvrA(2)B(2) complex to a putative damaged site, the DNA wraps around one UvrB monomer. DNA wrap is dependent on ATP binding by UvrB and probably causes local melting of the DNA helix, facilitating insertion of UvrB beta-hairpin between the DNA strands. Then UvrB probes one DNA strand for the presence of a lesion. If a lesion is found the UvrA subunits dissociate and the UvrB-DNA preincision complex is formed. This complex is subsequently bound by UvrC and the second UvrB is released. If no lesion is found, the DNA wraps around the other UvrB subunit that will check the other stand for damage. The sequence is that of UvrABC system protein B from Salmonella arizonae (strain ATCC BAA-731 / CDC346-86 / RSK2980).